Consider the following 256-residue polypeptide: Putative bidirectional sugar transporter SWEET7e (256 aa).

Residues 1 to 9 (MVSPDLIRN) are Extracellular-facing. Residues 10–30 (VVGIVGNAISFGLFLSPVLTF) form a helical membrane-spanning segment. The MtN3/slv 1 domain maps to 10-97 (VVGIVGNAIS…TIFFLFSNKK (88 aa)). Topologically, residues 31 to 45 (WRIIKEKDMKYFKAD) are cytoplasmic. A helical transmembrane segment spans residues 46 to 66 (PYLATLLNCMLWVFYGLPIVH). At 67–69 (PNS) the chain is on the extracellular side. A helical transmembrane segment spans residues 70-90 (ILVVTINGIGLVIEAVYLTIF). At 91-100 (FLFSNKKNKK) the chain is on the cytoplasmic side. The helical transmembrane segment at 101–121 (MGVVLATEALFMAAVALGVLL) threads the bilayer. At 122 to 130 (GAHTHQRRS) the chain is on the extracellular side. A helical transmembrane segment spans residues 131-151 (LIVGILCVIFGTIMYSSPLTI). Residues 133–212 (VGILCVIFGT…LMQLILDKNQ (80 aa)) enclose the MtN3/slv 2 domain. Residues 152 to 164 (MSQVVKTKSVEYM) are Cytoplasmic-facing. Residues 165 to 185 (PLLLSVVSFLNGLCWTSYALI) traverse the membrane as a helical segment. A topological domain (extracellular) is located at residue Arg-186. A helical transmembrane segment spans residues 187–207 (FDIFITIPNGLGVLFTLMQLI). Over 208–256 (LDKNQDKNLELPTVAPVAKETSIVTPVSKDDDINGSTASHVIINITKEP) the chain is Cytoplasmic.

It belongs to the SWEET sugar transporter family. Forms homooligomers and/or heterooligomers.

It localises to the cell membrane. Its function is as follows. Mediates both low-affinity uptake and efflux of sugar across the plasma membrane. The chain is Putative bidirectional sugar transporter SWEET7e (SWEET7E) from Oryza sativa subsp. japonica (Rice).